Reading from the N-terminus, the 78-residue chain is Delta-conotoxin-like Ai6.1 (78 aa).

The signal sequence occupies residues 1–22 (MKLTCVMIVAVLFLTAWTFATA). Residues 23–49 (DDPRNGLGNLFSNAHHEMKNPEASKLN) constitute a propeptide that is removed on maturation. Intrachain disulfides connect C53–C68, C60–C72, and C67–C77.

Belongs to the conotoxin O1 superfamily. Expressed by the venom duct.

It is found in the secreted. In terms of biological role, delta-conotoxins bind to site 6 of voltage-gated sodium channels (Nav) and inhibit the inactivation process. This chain is Delta-conotoxin-like Ai6.1, found in Conus ammiralis (Admiral cone).